The following is a 442-amino-acid chain: MTNTNETIFALSTVFGKSGVAVIRISGNYALKALNHFHIKKEIKPRFATLVDLYDDSSQLIDNGIIIYFPAPNSFTGEDVIELQVHGSKAVIKIILEELSKVFVMAKPGEFSLRAFLNGKFDLTQIEGIADLIDAETKMQAKQAIKQISGELERLYSNWRQRLITIQSKIEAYIDFPEDIWAEKSELEKINNEVQSLVRLIQEHLNDNRRGERLREGLHIVITGEPNVGKSTLFNFLAKRDIAIVSEYAGTTRDILEAHIDIGGYPIILSDTAGIRESSDPIELEGISRAKKRSFEADLRIELFPFEQRPNINCNVVNSDTIYVLSKADDVINNHDIKINGIDLLPVSILKGIGTNKLISLIKEKAEEKFGHDRDTPVITRQRHRNHMQKALEHLQRFNIDNPIELISEDLRLAAFELGAVIGIIDVEEILSSVFSNFCVGK.

R24, E82, and K120 together coordinate (6S)-5-formyl-5,6,7,8-tetrahydrofolate. The TrmE-type G domain maps to 217 to 367 (GLHIVITGEP…LISLIKEKAE (151 aa)). Residues 227–232 (NVGKST), 246–252 (SEYAGTT), and 271–274 (DTAG) each bind GTP. Residues S231 and T252 each coordinate Mg(2+). K442 is a (6S)-5-formyl-5,6,7,8-tetrahydrofolate binding site.

The protein belongs to the TRAFAC class TrmE-Era-EngA-EngB-Septin-like GTPase superfamily. TrmE GTPase family. As to quaternary structure, homodimer. Heterotetramer of two MnmE and two MnmG subunits. K(+) serves as cofactor.

The protein resides in the cytoplasm. In terms of biological role, exhibits a very high intrinsic GTPase hydrolysis rate. Involved in the addition of a carboxymethylaminomethyl (cmnm) group at the wobble position (U34) of certain tRNAs, forming tRNA-cmnm(5)s(2)U34. This is tRNA modification GTPase MnmE from Wolbachia sp. subsp. Drosophila simulans (strain wRi).